The primary structure comprises 269 residues: Ubiquinone/menaquinone biosynthesis C-methyltransferase UbiE (269 aa).

Residues threonine 92, aspartate 113, and 141–142 (NA) contribute to the S-adenosyl-L-methionine site.

This sequence belongs to the class I-like SAM-binding methyltransferase superfamily. MenG/UbiE family.

The enzyme catalyses a 2-demethylmenaquinol + S-adenosyl-L-methionine = a menaquinol + S-adenosyl-L-homocysteine + H(+). The catalysed reaction is a 2-methoxy-6-(all-trans-polyprenyl)benzene-1,4-diol + S-adenosyl-L-methionine = a 5-methoxy-2-methyl-3-(all-trans-polyprenyl)benzene-1,4-diol + S-adenosyl-L-homocysteine + H(+). The protein operates within quinol/quinone metabolism; menaquinone biosynthesis; menaquinol from 1,4-dihydroxy-2-naphthoate: step 2/2. It participates in cofactor biosynthesis; ubiquinone biosynthesis. Methyltransferase required for the conversion of demethylmenaquinol (DMKH2) to menaquinol (MKH2) and the conversion of 2-polyprenyl-6-methoxy-1,4-benzoquinol (DDMQH2) to 2-polyprenyl-3-methyl-6-methoxy-1,4-benzoquinol (DMQH2). The protein is Ubiquinone/menaquinone biosynthesis C-methyltransferase UbiE of Brucella canis (strain ATCC 23365 / NCTC 10854 / RM-666).